The chain runs to 115 residues: Large ribosomal subunit protein bL20 (115 aa).

It belongs to the bacterial ribosomal protein bL20 family.

Functionally, binds directly to 23S ribosomal RNA and is necessary for the in vitro assembly process of the 50S ribosomal subunit. It is not involved in the protein synthesizing functions of that subunit. This Prochlorococcus marinus (strain MIT 9312) protein is Large ribosomal subunit protein bL20.